Reading from the N-terminus, the 356-residue chain is Protein pelota homolog (356 aa).

The protein belongs to the eukaryotic release factor 1 family. Pelota subfamily. In terms of assembly, monomer. A divalent metal cation serves as cofactor.

Its subcellular location is the cytoplasm. Its function is as follows. May function in recognizing stalled ribosomes, interact with stem-loop structures in stalled mRNA molecules, and effect endonucleolytic cleavage of the mRNA. May play a role in the release non-functional ribosomes and degradation of damaged mRNAs. Has endoribonuclease activity. The protein is Protein pelota homolog of Pyrococcus abyssi (strain GE5 / Orsay).